The following is a 310-amino-acid chain: tRNA dimethylallyltransferase (310 aa).

10-17 is a binding site for ATP; sequence GPTAVGKS. Position 12-17 (12-17) interacts with substrate; sequence TAVGKS. Positions 35–38 are interaction with substrate tRNA; sequence DSMQ.

The protein belongs to the IPP transferase family. Monomer. Requires Mg(2+) as cofactor.

It catalyses the reaction adenosine(37) in tRNA + dimethylallyl diphosphate = N(6)-dimethylallyladenosine(37) in tRNA + diphosphate. Its function is as follows. Catalyzes the transfer of a dimethylallyl group onto the adenine at position 37 in tRNAs that read codons beginning with uridine, leading to the formation of N6-(dimethylallyl)adenosine (i(6)A). The polypeptide is tRNA dimethylallyltransferase (Clostridium perfringens (strain SM101 / Type A)).